Consider the following 453-residue polypeptide: tRNA modification GTPase MnmE (453 aa).

Positions 22, 79, and 119 each coordinate (6S)-5-formyl-5,6,7,8-tetrahydrofolate. The region spanning 215–376 (GMKVVIAGRP…LRNHLKECMG (162 aa)) is the TrmE-type G domain. A K(+)-binding site is contributed by N225. GTP contacts are provided by residues 225 to 230 (NAGKSS), 244 to 250 (TDIAGTT), 269 to 272 (DTAG), and 334 to 337 (NKAD). S229 is a Mg(2+) binding site. T244, I246, and T249 together coordinate K(+). T250 is a Mg(2+) binding site. K453 provides a ligand contact to (6S)-5-formyl-5,6,7,8-tetrahydrofolate.

Belongs to the TRAFAC class TrmE-Era-EngA-EngB-Septin-like GTPase superfamily. TrmE GTPase family. Homodimer. Heterotetramer of two MnmE and two MnmG subunits. It depends on K(+) as a cofactor.

It is found in the cytoplasm. Exhibits a very high intrinsic GTPase hydrolysis rate. Involved in the addition of a carboxymethylaminomethyl (cmnm) group at the wobble position (U34) of certain tRNAs, forming tRNA-cmnm(5)s(2)U34. The protein is tRNA modification GTPase MnmE of Vibrio vulnificus (strain CMCP6).